A 429-amino-acid chain; its full sequence is Adenylosuccinate synthetase (429 aa).

GTP is bound by residues 12–18 (GDEGKGK) and 40–42 (GHT). Asp13 (proton acceptor) is an active-site residue. Mg(2+)-binding residues include Asp13 and Gly40. IMP contacts are provided by residues 13-16 (DEGK), 38-41 (NAGH), Thr129, Arg143, Gln223, Thr238, and Arg302. His41 (proton donor) is an active-site residue. A substrate-binding site is contributed by 298–304 (TVTGRRR). Residues Arg304, 330–332 (KLD), and 412–414 (STS) contribute to the GTP site.

It belongs to the adenylosuccinate synthetase family. Homodimer. It depends on Mg(2+) as a cofactor.

It localises to the cytoplasm. The enzyme catalyses IMP + L-aspartate + GTP = N(6)-(1,2-dicarboxyethyl)-AMP + GDP + phosphate + 2 H(+). The protein operates within purine metabolism; AMP biosynthesis via de novo pathway; AMP from IMP: step 1/2. Plays an important role in the de novo pathway of purine nucleotide biosynthesis. Catalyzes the first committed step in the biosynthesis of AMP from IMP. The sequence is that of Adenylosuccinate synthetase from Granulibacter bethesdensis (strain ATCC BAA-1260 / CGDNIH1).